Consider the following 207-residue polypeptide: Nuclear transcription factor Y subunit beta (207 aa).

The segment at 1-52 is a domain; that stretch reads MTMDGDSSTTDASQLGISADYIGGSHYVIQPHDDTEDSMNDHEDTNGSKESF. The tract at residues 27-52 is disordered; sequence YVIQPHDDTEDSMNDHEDTNGSKESF. The span at 39–52 shows a compositional bias: basic and acidic residues; it reads MNDHEDTNGSKESF. Positions 53–142 are b domain; that stretch reads REQDIYLPIA…PLKLYLQKFR (90 aa). A DNA-binding region spans residues 59–65; the sequence is LPIANVA. Positions 86-97 are subunit association domain (SAD); it reads VQECVSEFISFI. Lysine 140 is covalently cross-linked (Glycyl lysine isopeptide (Lys-Gly) (interchain with G-Cter in ubiquitin)). The tract at residues 143–207 is c domain; it reads EAMKGEKGIG…ISGVQQIQFS (65 aa).

It belongs to the NFYB/HAP3 subunit family. As to quaternary structure, heterotrimeric transcription factor composed of three components, NF-YA, NF-YB and NF-YC. NF-YB and NF-YC must interact and dimerize for NF-YA association and DNA binding. Interacts with C1QBP. Monoubiquitination at Lys-140 plays an important role in transcriptional activation by allowing the deposition of histone H3 methylations as well as histone H2B monoubiquitination at 'Lys-121'.

It is found in the nucleus. In terms of biological role, component of the sequence-specific heterotrimeric transcription factor (NF-Y) which specifically recognizes a 5'-CCAAT-3' box motif found in the promoters of its target genes. NF-Y can function as both an activator and a repressor, depending on its interacting cofactors. The sequence is that of Nuclear transcription factor Y subunit beta (NFYB) from Homo sapiens (Human).